The following is a 942-amino-acid chain: Leucine--tRNA ligase 2 (942 aa).

Positions 35–45 (PYPNSPFHLGH) match the 'HIGH' region motif. The 'KMSKS' region signature appears at 619–623 (KMSKS). Residue K622 participates in ATP binding.

This sequence belongs to the class-I aminoacyl-tRNA synthetase family.

Its subcellular location is the cytoplasm. It carries out the reaction tRNA(Leu) + L-leucine + ATP = L-leucyl-tRNA(Leu) + AMP + diphosphate. This is Leucine--tRNA ligase 2 from Sulfolobus acidocaldarius (strain ATCC 33909 / DSM 639 / JCM 8929 / NBRC 15157 / NCIMB 11770).